The following is a 407-amino-acid chain: Shaggy-related protein kinase GSK1 (407 aa).

The span at 1–19 (MEAPPGPEPMELDAPPPPA) shows a compositional bias: pro residues. Positions 1 to 21 (MEAPPGPEPMELDAPPPPAAV) are disordered. A Protein kinase domain is found at 68–352 (YMAERVVGTG…ALDACAHSFF (285 aa)). Residues 74 to 82 (VGTGSFGIV) and Lys97 each bind ATP. Catalysis depends on Asp193, which acts as the Proton acceptor.

This sequence belongs to the protein kinase superfamily. CMGC Ser/Thr protein kinase family. GSK-3 subfamily. Interacts with LIC. In terms of tissue distribution, highly expressed in the entire young panicles, spikelets, awns, vascular bundles of palea and lemma, stigma and rachilla. Expressed in root tips, root hairs, lamina joint in the collar region, vascular bundles of coleoptiles.

The catalysed reaction is L-seryl-[protein] + ATP = O-phospho-L-seryl-[protein] + ADP + H(+). It carries out the reaction L-threonyl-[protein] + ATP = O-phospho-L-threonyl-[protein] + ADP + H(+). Its function is as follows. Probable serine-threonine kinase that may act as a negative regulator of brassinosteroid (BR) signaling during flower development. May have physiological roles in stress signal-transduction pathways. Phosphorylates LIC in response to BR perception. The chain is Shaggy-related protein kinase GSK1 from Oryza sativa subsp. japonica (Rice).